The sequence spans 426 residues: Adenylosuccinate synthetase (426 aa).

GTP-binding positions include 11-17 (GDEGKGK) and 39-41 (GHT). The active-site Proton acceptor is D12. D12 and G39 together coordinate Mg(2+). Residues 12–15 (DEGK), 37–40 (NAGH), T130, R144, N226, T241, and R305 each bind IMP. H40 (proton donor) is an active-site residue. 301–307 (VTTGRKR) serves as a coordination point for substrate. GTP is bound by residues R307, 333–335 (KLD), and 415–417 (GTG).

The protein belongs to the adenylosuccinate synthetase family. Homodimer. It depends on Mg(2+) as a cofactor.

The protein resides in the cytoplasm. The catalysed reaction is IMP + L-aspartate + GTP = N(6)-(1,2-dicarboxyethyl)-AMP + GDP + phosphate + 2 H(+). It participates in purine metabolism; AMP biosynthesis via de novo pathway; AMP from IMP: step 1/2. Plays an important role in the de novo pathway and in the salvage pathway of purine nucleotide biosynthesis. Catalyzes the first committed step in the biosynthesis of AMP from IMP. In Meyerozyma guilliermondii (strain ATCC 6260 / CBS 566 / DSM 6381 / JCM 1539 / NBRC 10279 / NRRL Y-324) (Yeast), this protein is Adenylosuccinate synthetase.